We begin with the raw amino-acid sequence, 424 residues long: DUF21 domain-containing protein At4g33700 (424 aa).

At 1 to 11 the chain is on the extracellular side; the sequence is MAVEYVCCSPN. The CNNM transmembrane domain occupies 8–191; sequence CSPNFFIHIA…GKGGELTHDE (184 aa). Residues 12–32 traverse the membrane as a helical segment; that stretch reads FFIHIAVIVFLVLFAGLMSGL. Topologically, residues 33 to 70 are cytoplasmic; that stretch reads TLGLMSLSLVDLEVLAKSGTPEHRKYAAKILPVVKNQH. Residues 71–91 form a helical membrane-spanning segment; it reads LLLVTLLICNAAAMETLPIFL. The Extracellular portion of the chain corresponds to 92 to 94; that stretch reads DGL. The chain crosses the membrane as a helical span at residues 95-115; the sequence is VTAWGAILISVTLILLFGEII. At 116–136 the chain is on the cytoplasmic side; that stretch reads PQSICSRYGLAIGATVAPFVR. A helical transmembrane segment spans residues 137–157; sequence VLVFICLPVAWPISKLLDFLL. Residues 158 to 424 lie on the Extracellular side of the membrane; it reads GHRRAALFRR…DETDHHFEDS (267 aa). In terms of domain architecture, CBS 1 spans 210-271; sequence MTPISDIFVI…TINPDEEIPV (62 aa). N-linked (GlcNAc...) asparagine glycosylation is found at N273 and N319. CBS domains follow at residues 275 to 331 and 355 to 416; these read TIRR…DVDS and PNRA…IFDE. Disordered regions lie at residues 321–340 and 355–374; these read SVKE…PQER and PNRA…SKDN. S331 carries the phosphoserine modification.

It is found in the membrane. This Arabidopsis thaliana (Mouse-ear cress) protein is DUF21 domain-containing protein At4g33700 (CBSDUF6).